The following is a 614-amino-acid chain: FAD-dependent monooxygenase terD (614 aa).

A signal peptide spans 1–23 (MSSKFDVVICGSGTAGLAAATWL). FAD contacts are provided by residues 6-35 (DVVI…ILES), Gln44, Val137, and 239-241 (RVY). Residue Asn260 is glycosylated (N-linked (GlcNAc...) asparagine). FAD contacts are provided by Tyr282 and Asp303. Asn317 carries N-linked (GlcNAc...) asparagine glycosylation. Ser319 contributes to the FAD binding site. N-linked (GlcNAc...) asparagine glycosylation occurs at Asn602.

The protein belongs to the PheA/TfdB FAD monooxygenase family. The cofactor is FAD.

It functions in the pathway secondary metabolite biosynthesis. In terms of biological role, FAD-dependent monooxygenase; part of the gene cluster that mediates the biosynthesis of terrein, a fungal metabolite with ecological, antimicrobial, antiproliferative, and antioxidative activities. The first step in the pathway is performed by the polyketide synthase terA that produces 4-hydroxy-6-methylpyranon (4-HMP), orsellinic acid (OA), and 2,3-dehydro-6-hydroxymellein (2,3-dehydro-6-HM) by condensing acetyl-CoA with two, three, or four malonyl-CoA units, respectively. 4-HMP and OA are not pathway intermediates, but are rather shunt or side products. 2,3-dehydro-6-HM is further converted to 6-hydroxymellein (6-HM) by the 6-hydroxymellein synthase terB. The monooxygenases terC and terD, the multicopper oxidase terE and the Kelch-like protein terF are then involved in the transformation of 6-HM to terrein. Even if they are co-regulated with the other terrein cluster genes, terH and terI seem to be dispensable for terrein production; whereas one or both of the 2 transporters terG and terJ are probably required for efficient secretion of metabolites. The chain is FAD-dependent monooxygenase terD from Aspergillus terreus (strain NIH 2624 / FGSC A1156).